The primary structure comprises 436 residues: GTPase Der (436 aa).

2 EngA-type G domains span residues 4-167 (PVVA…PKDH) and 176-351 (IKFC…DNHA). GTP-binding positions include 10-17 (GRPNVGKS), 57-61 (DTGGI), 119-122 (NKID), 182-189 (GRPNVGKS), 229-233 (DTAGM), and 294-297 (NKWD). The KH-like domain occupies 352-436 (MRVQTNVLNE…PIKIIARPRK (85 aa)).

This sequence belongs to the TRAFAC class TrmE-Era-EngA-EngB-Septin-like GTPase superfamily. EngA (Der) GTPase family. In terms of assembly, associates with the 50S ribosomal subunit.

GTPase that plays an essential role in the late steps of ribosome biogenesis. In Geobacillus thermodenitrificans (strain NG80-2), this protein is GTPase Der.